The following is a 665-amino-acid chain: METPGQKRATRSTHTPLSPTRITRLQEKEDLQGLNDRLAVYIDKVRSLELENARLRLRITESEDVISREVTGIKSAYETELADARKTLDSVAKERARLQLELSKIREEHKELKARNAKKESDLLTAQARLKDLEALLNSKDAALTTALGEKRNLENEIRELKAHIAKLEASLADTKKQLQDEMLRRVDTENRNQTLKEELEFQKSIYNEEMRETKRRHETRLVEVDNGRQREFESKLADALHELRAQHEGQIGLYKEELGKTYNAKLENAKQSAERNSSLVGEAQEEIQQSRIRIDSLSAQLSQLQKQLAAREAKLRDLEDAYARERDSSRRLLADKDREMAEMRARMQQQLDEYQELLDIKLALDMEINAYRKLLEGEEERLRLSPSPNTQKRSARTIASHSGAHISSSASKRRRLEEGESRSSSFTQHARTTGKVSVEEVDPEGKYVRLRNKSNEDQSLGNWQIKRQIGDETPIVYKFPPRLTLKAGQTVTIWASGAGATNSPPSDLVWKAQSSWGTGDSIRTALLTSSNEEVAMRKLVRTVVINDEDDEDNDDMEHHHHHHHHHHDGQNSSGDPGEYNLRSRTIVCTSCGRPAEKSVLASQGSGLVTGSSGSSSSSVTLTRTYRSTGGTSGGSGLGESPVTRNFIVGNGQRAQVAPQNCSIM.

M1 carries the post-translational modification N-acetylmethionine. Residues 1–29 (METPGQKRATRSTHTPLSPTRITRLQEKE) are head. Phosphoserine is present on S18. Residues 27–383 (EKEDLQGLND…KLLEGEEERL (357 aa)) form the IF rod domain. Residues 30 to 66 (DLQGLNDRLAVYIDKVRSLELENARLRLRITESEDVI) form a coil 1A region. The tract at residues 67 to 76 (SREVTGIKSA) is linker 1. The coil 1B stretch occupies residues 77–214 (YETELADARK…SIYNEEMRET (138 aa)). Residues 215–238 (KRRHETRLVEVDNGRQREFESKLA) form a linker 2 region. The tract at residues 239 to 383 (DALHELRAQH…KLLEGEEERL (145 aa)) is coil 2. Disordered stretches follow at residues 381-441 (ERLR…SVEE), 550-581 (DDEDNDDMEHHHHHHHHHHDGQNSSGDPGEYN), and 602-641 (ASQGSGLVTGSSGSSSSSVTLTRTYRSTGGTSGGSGLGES). Residues 384-664 (RLSPSPNTQK…AQVAPQNCSI (281 aa)) are tail. S388 is modified (phosphoserine). Residues 399–411 (IASHSGAHISSSA) show a composition bias toward low complexity. The Nuclear localization signal motif lies at 413–418 (KRRRLE). Residues 425–542 (SSFTQHARTT…EEVAMRKLVR (118 aa)) form the LTD domain. Polar residues predominate over residues 427–436 (FTQHARTTGK). Low complexity predominate over residues 605-630 (GSGLVTGSSGSSSSSVTLTRTYRSTG). A Cysteine methyl ester modification is found at C662. C662 carries S-farnesyl cysteine lipidation. The propeptide at 663–665 (SIM) is removed in mature form.

This sequence belongs to the intermediate filament family. In terms of assembly, homodimer. Lamin dimers then assemble into dimeric head-to-tail polymers. Ultimately, two head-to-tail polymers assemble laterally into a protofilament with a uniformly shaped rod of 3.5 nm in diameter. Post-translationally, phosphorylation plays a key role in lamin organization, subcellular localization and nuclear envelope disintegration. Phosphorylation by CDK1 at Ser-18 at the onset of mitosis drives lamin disassembly and nuclear envelope breakdown.

It localises to the nucleus lamina. It is found in the nucleus envelope. The protein resides in the nucleus. The protein localises to the nucleoplasm. Its subcellular location is the nucleus matrix. In terms of biological role, lamins are intermediate filament proteins that assemble into a filamentous meshwork, and which constitute the major components of the nuclear lamina, a fibrous layer on the nucleoplasmic side of the inner nuclear membrane. Lamins provide a framework for the nuclear envelope, bridging the nuclear envelope and chromatin, thereby playing an important role in nuclear assembly, chromatin organization, nuclear membrane and telomere dynamics. The structural integrity of the lamina is strictly controlled by the cell cycle, as seen by the disintegration and formation of the nuclear envelope in prophase and telophase, respectively. This chain is Lamin-A (lmna), found in Xenopus laevis (African clawed frog).